Consider the following 1460-residue polypeptide: Collagen alpha-1(I) chain (1460 aa).

An N-terminal signal peptide occupies residues 1 to 22; it reads MFSFVDLRLLLLLAATALLTHG. The propeptide at 23-157 is N-terminal propeptide; the sequence is QEEGQEEDIP…PPGLGGNFAP (135 aa). Positions 34 to 92 constitute a VWFC domain; the sequence is VTCVQNGLRYYDRDVWKPEACRICVCDNGNVLCDDVICDETKNCPGAQVPPGECCPVCP. The disordered stretch occupies residues 96–1213; the sequence is ASPTDQETTG…KAHDGGRYYR (1118 aa). Residues 134–149 show a composition bias toward pro residues; it reads PGLPGPPGPPGPPGPP. The segment at 158 to 174 is nonhelical region (N-terminal); that stretch reads QMSYGYDEKSTGGISVP. K166 carries the allysine modification. Position 167 is a phosphoserine (S167). Residues 175–1188 are triple-helical region; sequence GPMGPSGPRG…PGPPGPPGPP (1014 aa). 4-hydroxyproline is present on residues P186, P189, P192, P201, P204, P207, P222, P237, P243, P252, and P258. A compositionally biased stretch (low complexity) spans 194–213; the sequence is PQGFQGPPGEPGEPGASGPM. Positions 225-239 are enriched in basic and acidic residues; that stretch reads NGDDGEAGKPGRPGE. 5-hydroxylysine; alternate is present on K261. K261 carries O-linked (Gal...) hydroxylysine; alternate glycosylation. S267 is modified (phosphoserine). The span at 275-291 shows a compositional bias: low complexity; that stretch reads DAGPAGPKGEPGSPGEN. A 4-hydroxyproline mark is found at P285, P288, P294, P303, and P309. Over residues 314–327 the composition is skewed to low complexity; it reads PAGARGNDGATGAA. Positions 329–341 are enriched in pro residues; that stretch reads PPGPTGPAGPPGF. Residues P330, P339, P342, P369, P372, P384, P390, P399, P405, P408, and P423 each carry the 4-hydroxyproline modification. Positions 375–414 are enriched in low complexity; it reads AGAAGPAGNPGADGQPGAKGANGAPGIAGAPGFPGARGPS. 5-hydroxylysine is present on K426. 4-hydroxyproline is present on residues P432, P435, P447, P456, P471, P477, P486, and P492. Over residues 481–490 the composition is skewed to gly residues; it reads GERGGPGSRG. K501 carries the 5-hydroxylysine modification. 4-hydroxyproline occurs at positions 510, 519, 525, 531, 540, 543, 552, 561, 567, 579, 588, 597, 600, 618, 636, 642, 648, 654, 660, 666, 678, 687, 699, 711, 714, 720, 726, and 735. The segment covering 534–560 has biased composition (low complexity); it reads KGLTGSPGSPGPDGKTGPPGPAGQDGR. Over residues 569–588 the composition is skewed to low complexity; sequence ARGQAGVMGFPGPKGAAGEP. Residues 630 to 657 show a composition bias toward low complexity; sequence QGPAGSPGFQGLPGPAGPPGEAGKPGEQ. The span at 692–720 shows a compositional bias: low complexity; it reads PRGANGAPGNDGAKGDAGAPGAPGSQGAP. Residues 741–743 carry the Cell attachment site motif; the sequence is RGD. K747 bears the 5-hydroxylysine mark. 4-hydroxyproline is present on residues P753, P768, and P774. Low complexity predominate over residues 780–794; it reads AGPSGPAGPTGARGA. S783 carries the phosphoserine modification. 4-hydroxyproline is present on residues P795, P801, P804, P813, P819, P837, P846, and P855. Positions 807 to 834 are enriched in low complexity; the sequence is AGFAGPPGADGQPGAKGEPGDAGAKGDA. Over residues 836 to 848 the composition is skewed to pro residues; the sequence is PPGPAGPTGPPGP. K858 carries the post-translational modification 5-hydroxylysine. Residues 863–879 are compositionally biased toward low complexity; it reads SAGPPGATGFPGAAGRV. 4-hydroxyproline is present on residues P867 and P873. P881 bears the 3-hydroxyproline mark. Residues P882, P891, P894, P915, P924, P933, P942, P960, P969, P972, P978, P993, P999, P1005, P1014, and P1020 each carry the 4-hydroxyproline modification. Residues 908 to 917 show a composition bias toward low complexity; sequence ETGPAGRPGE. The segment covering 927-951 has biased composition (low complexity); that stretch reads AGEKGSPGADGPAGAPGTPGPQGIA. Over residues 992-1002 the composition is skewed to pro residues; sequence PPGPMGPPGLA. Residues 1004–1019 show a composition bias toward low complexity; the sequence is PPGESGREGSPGAEGS. K1029 is modified (5-hydroxylysine). Residues 1038–1053 are compositionally biased toward pro residues; that stretch reads AGPPGAPGAPGAPGPV. P1041, P1044, and P1047 each carry 4-hydroxyproline. Low complexity predominate over residues 1074 to 1088; sequence IGPVGARGPAGPQGP. The Cell attachment site signature appears at 1089–1091; that stretch reads RGD. Basic and acidic residues predominate over residues 1089–1103; that stretch reads RGDKGETGEQGDRGI. K1092 is modified (5-hydroxylysine). At K1104 the chain carries 5-hydroxylysine; alternate. An O-linked (Gal...) hydroxylysine; alternate glycan is attached at K1104. 4-hydroxyproline occurs at positions 1116, 1119, 1122, 1140, and 1155. The segment covering 1122-1155 has biased composition (low complexity); that stretch reads PGEQGPSGASGPAGPRGPPGSAGSPGKDGLNGLP. P1160 is subject to 3-hydroxyproline. 4-hydroxyproline is present on P1161. Positions 1173–1188 are enriched in pro residues; sequence VGPPGPPGPPGPPGPP. P1175 is modified (3-hydroxyproline). P1176 carries the post-translational modification 4-hydroxyproline. P1178 carries the post-translational modification 3-hydroxyproline. At P1179 the chain carries 4-hydroxyproline. Position 1181 is a 3-hydroxyproline (P1181). 4-hydroxyproline occurs at positions 1182, 1185, and 1188. Positions 1189 to 1214 are nonhelical region (C-terminal); it reads SGGFDFSFLPQPPQEKAHDGGRYYRA. Basic and acidic residues predominate over residues 1203-1213; sequence EKAHDGGRYYR. K1204 bears the Allysine mark. A propeptide spans 1215 to 1460 (C-terminal propeptide); the sequence is DDANVVRDRD…GMDIGPVCFL (246 aa). Positions 1225–1460 constitute a Fibrillar collagen NC1 domain; the sequence is LEVDTTLKSL…GMDIGPVCFL (236 aa). Disulfide bonds link C1255–C1287, C1295–C1458, and C1366–C1411. Ca(2+) is bound by residues D1273, N1275, Q1276, C1278, and D1281. N1361 carries an N-linked (GlcNAc...) asparagine glycan.

This sequence belongs to the fibrillar collagen family. Trimers of one alpha 2(I) and two alpha 1(I) chains. Interacts with MRC2. Interacts with TRAM2. Interacts with MFAP4 in a Ca (2+)-dependent manner. Contains mostly 4-hydroxyproline. Proline residues at the third position of the tripeptide repeating unit (G-X-Y) are hydroxylated in some or all of the chains. Post-translationally, contains 3-hydroxyproline at a few sites. This modification occurs on the first proline residue in the sequence motif Gly-Pro-Hyp, where Hyp is 4-hydroxyproline. In terms of processing, lysine residues at the third position of the tripeptide repeating unit (G-X-Y) are 5-hydroxylated in some or all of the chains. O-glycosylated on hydroxylated lysine residues. The O-linked glycan consists of a Glc-Gal disaccharide.

Its subcellular location is the secreted. It localises to the extracellular space. The protein resides in the extracellular matrix. Functionally, type I collagen is a member of group I collagen (fibrillar forming collagen). This is Collagen alpha-1(I) chain (COL1A1) from Canis lupus familiaris (Dog).